A 235-amino-acid polypeptide reads, in one-letter code: Nitrile hydratase subunit beta (235 aa).

The protein belongs to the nitrile hydratase subunit beta family. As to quaternary structure, heterodimer of an alpha and a beta chain.

It carries out the reaction an aliphatic primary amide = an aliphatic nitrile + H2O. Functionally, NHase catalyzes the hydration of various nitrile compounds to the corresponding amides. This chain is Nitrile hydratase subunit beta (nthB), found in Rhodococcus sp.